A 556-amino-acid polypeptide reads, in one-letter code: Glucose-6-phosphate isomerase (556 aa).

E360 serves as the catalytic Proton donor. Catalysis depends on residues H391 and K519.

Belongs to the GPI family.

It localises to the cytoplasm. The enzyme catalyses alpha-D-glucose 6-phosphate = beta-D-fructose 6-phosphate. It participates in carbohydrate biosynthesis; gluconeogenesis. Its pathway is carbohydrate degradation; glycolysis; D-glyceraldehyde 3-phosphate and glycerone phosphate from D-glucose: step 2/4. Catalyzes the reversible isomerization of glucose-6-phosphate to fructose-6-phosphate. This chain is Glucose-6-phosphate isomerase, found in Acinetobacter baumannii (strain ATCC 17978 / DSM 105126 / CIP 53.77 / LMG 1025 / NCDC KC755 / 5377).